A 103-amino-acid polypeptide reads, in one-letter code: NADH-quinone oxidoreductase subunit K (103 aa).

3 helical membrane-spanning segments follow: residues 4–24 (LTSY…GVIA), 28–48 (IFVI…FLIT), and 64–84 (MVIS…ILLF).

Belongs to the complex I subunit 4L family. As to quaternary structure, NDH-1 is composed of 14 different subunits. Subunits NuoA, H, J, K, L, M, N constitute the membrane sector of the complex.

It is found in the cell inner membrane. It catalyses the reaction a quinone + NADH + 5 H(+)(in) = a quinol + NAD(+) + 4 H(+)(out). Its function is as follows. NDH-1 shuttles electrons from NADH, via FMN and iron-sulfur (Fe-S) centers, to quinones in the respiratory chain. The immediate electron acceptor for the enzyme in this species is believed to be ubiquinone. Couples the redox reaction to proton translocation (for every two electrons transferred, four hydrogen ions are translocated across the cytoplasmic membrane), and thus conserves the redox energy in a proton gradient. This chain is NADH-quinone oxidoreductase subunit K, found in Aliarcobacter butzleri (strain RM4018) (Arcobacter butzleri).